Consider the following 21-residue polypeptide: Trypsin (21 aa).

Belongs to the peptidase S1 family.

It is found in the secreted. The protein resides in the extracellular space. It catalyses the reaction Preferential cleavage: Arg-|-Xaa, Lys-|-Xaa.. This is Trypsin from Apis mellifera scutellata (Africanized honey bee).